Here is a 501-residue protein sequence, read N- to C-terminus: Sucrose transport protein SUT2 (501 aa).

Residues methionine 1–alanine 31 lie on the Cytoplasmic side of the membrane. A helical membrane pass occupies residues serine 32 to valine 52. Topologically, residues glutamine 53–leucine 55 are extracellular. Residues glycine 56–valine 76 form a helical membrane-spanning segment. The Cytoplasmic segment spans residues glutamine 77–arginine 98. Residues proline 99 to alanine 119 traverse the membrane as a helical segment. Topologically, residues aspartate 120 to arginine 135 are extracellular. The helical transmembrane segment at leucine 136 to threonine 156 threads the bilayer. The Cytoplasmic segment spans residues glutamine 157–arginine 176. The chain crosses the membrane as a helical span at residues isoleucine 177–glycine 197. The Extracellular segment spans residues alanine 198–lysine 222. A helical transmembrane segment spans residues serine 223 to valine 243. Topologically, residues glutamine 244–proline 278 are cytoplasmic. Residues valine 279–phenylalanine 299 form a helical membrane-spanning segment. Topologically, residues aspartate 300 to arginine 327 are extracellular. The helical transmembrane segment at methionine 328–glutamate 348 threads the bilayer. The Cytoplasmic portion of the chain corresponds to lysine 349–alanine 356. A helical membrane pass occupies residues glycine 357–isoleucine 377. Over threonine 378–threonine 394 the chain is Extracellular. The chain crosses the membrane as a helical span at residues glycine 395 to tyrosine 415. The Cytoplasmic portion of the chain corresponds to serine 416–glutamine 433. A helical membrane pass occupies residues glycine 434–glycine 454. At serine 455–alanine 467 the chain is on the extracellular side. Residues proline 468–leucine 488 form a helical membrane-spanning segment. The Cytoplasmic portion of the chain corresponds to proline 489 to arginine 501.

Belongs to the glycoside-pentoside-hexuronide (GPH) cation symporter transporter (TC 2.A.2.4) family. In terms of assembly, homodimer. As to expression, widely expressed.

It is found in the cell membrane. The protein operates within glycan biosynthesis; sucrose metabolism. Its function is as follows. Responsible for the transport of sucrose into the cell, with the concomitant uptake of protons (symport system). May also transport other glucosides. This Oryza sativa subsp. japonica (Rice) protein is Sucrose transport protein SUT2 (SUT2).